A 387-amino-acid chain; its full sequence is Patatin-11 (387 aa).

The N-terminal stretch at 1-23 (MATTKSVLVLIFMILATTSSTFA) is a signal peptide. The 199-residue stretch at 32-230 (LSTDGGGIKG…TVGDPALLSL (199 aa)) folds into the PNPLA domain. A GXGXXG motif is present at residues 36 to 41 (GGGIKG). A GXSXG motif is present at residues 75–79 (GTSTG). Ser-77 serves as the catalytic Nucleophile. An N-linked (GlcNAc...) asparagine glycan is attached at Asn-115. Residue Asp-216 is the Proton acceptor of the active site. A DGA/G motif is present at residues 216–218 (DGG). Positions 322 to 385 (ENALNGTTTE…DRKKLRANKA (64 aa)) form a coiled coil. Residue Asn-326 is glycosylated (N-linked (GlcNAc...) asparagine).

The protein belongs to the patatin family. Tuber.

The protein resides in the vacuole. In terms of biological role, probable lipolytic acyl hydrolase (LAH), an activity which is thought to be involved in the response of tubers to pathogens. The protein is Patatin-11 of Solanum tuberosum (Potato).